The chain runs to 690 residues: Iron-regulated transcriptional activator AFT1 (690 aa).

Positions 1 to 21 (MEGFNPADIEHASPINSSDSH) are disordered. Zn(2+) is bound at residue Asp-110. Positions 111, 115, 131, 132, 133, 134, 135, and 138 each coordinate DNA. Residue Cys-143 participates in Zn(2+) binding. Positions 148–159 (RGRNARRKRKDK) are enriched in basic residues. Residues 148–205 (RGRNARRKRKDKPKGQDHEDEKSKINDDELEYASPSNATVTNGPQTSPDQTSSIKPKK) are disordered. Basic and acidic residues predominate over residues 160-174 (PKGQDHEDEKSKIND). Residues 181 to 201 (SPSNATVTNGPQTSPDQTSSI) show a composition bias toward polar residues. Cys-215 is a binding site for Zn(2+). Lys-226 lines the DNA pocket. Residues His-239 and His-241 each coordinate Zn(2+). Asn-263 is a binding site for DNA. The short motif at 291–293 (CDC) is the CDC [2Fe-2S] cluster binding motif element. 2 disordered regions span residues 335 to 357 (PCLP…PKSQ) and 612 to 655 (SSNE…VQKD). The span at 339–351 (SVNNTGSINTNNV) shows a compositional bias: polar residues. Positions 621–638 (HQYGPQQQPPQQLQYHQN) are enriched in low complexity. The span at 639–649 (QPHDGHNHEQH) shows a compositional bias: basic and acidic residues.

As to quaternary structure, homodimer. Dimerization decreases the DNA-binding activity.

The protein localises to the nucleus. With respect to regulation, dimerization via the binding of Fe(2+) or a [2Fe-2S] cluster decreases the DNA-binding activity. Its function is as follows. Transcription factor that activates the genes for FRE1, FRE2 and FET3 in response to iron deprivationand thereby plays a central role in iron homeostasis. Also required for the expression of LSO1. Recognizes the consensus iron-responsive element (Fe-RE) sequence 5'-CACCC-3' in the promoters of target genes. Iron could interact directly with AFT1 and inhibits its activity. In high iron condition, the presence of Fe(2+) or [2Fe-2S] cluster leads to dimerization, which in turn leads to a decrease in DNA affinity. The polypeptide is Iron-regulated transcriptional activator AFT1 (Saccharomyces cerevisiae (strain ATCC 204508 / S288c) (Baker's yeast)).